A 226-amino-acid chain; its full sequence is Probable functional amyloid protease FapD (226 aa).

The N-terminal stretch at 1–18 is a signal peptide; it reads MRTLILSLLLLVDLTTQA. A Peptidase C39 domain is found at 50 to 180; the sequence is QKTDFSCGAA…KGWNGIVFAV (131 aa). C56 is an active-site residue.

The protein belongs to the FapD family.

The protein resides in the periplasm. In terms of biological role, probable protease that might be involved in processing fibril precursors. Upon overexpression of the endogenous six-gene locus (fapA-fapF), cells form large clumps during liquid growth, make large amounts of biofilm and produce amyloid fibrils. The polypeptide is Probable functional amyloid protease FapD (Pseudomonas aeruginosa (strain ATCC 15692 / DSM 22644 / CIP 104116 / JCM 14847 / LMG 12228 / 1C / PRS 101 / PAO1)).